Reading from the N-terminus, the 476-residue chain is Cysteine--tRNA ligase (476 aa).

Zn(2+) is bound at residue C28. Positions 30-40 (PTVYDHTHLGH) match the 'HIGH' region motif. C208, H233, and E237 together coordinate Zn(2+). Positions 265–269 (KMSKS) match the 'KMSKS' region motif. K268 contacts ATP.

Belongs to the class-I aminoacyl-tRNA synthetase family. The cofactor is Zn(2+).

It is found in the cytoplasm. The catalysed reaction is tRNA(Cys) + L-cysteine + ATP = L-cysteinyl-tRNA(Cys) + AMP + diphosphate. The polypeptide is Cysteine--tRNA ligase (Methanococcus maripaludis (strain C7 / ATCC BAA-1331)).